Consider the following 285-residue polypeptide: Nurim (285 aa).

Over 1 to 16 (MSANVQVSGQLSSGPS) the chain is Nuclear. Residues 17 to 44 (LPACIVLSAVSLLCFVAGFGTGAEFVRF) form a helical membrane-spanning segment. The Perinuclear space segment spans residues 45–74 (LSFGAIFRNISGGLDGEIPLTWSEAIRNTQ). Residues 75-96 (FQCCIGIDIGLLFLFVLQHSLM) form a helical membrane-spanning segment. Topologically, residues 97-113 (AWTAVKKNVLHVFGVLQ) are nuclear. Residues 114–130 (RSIYILCTALSLQVLMR) form a helical membrane-spanning segment. Residues 131–149 (FWQPCPHGPYLWNVSSDPW) lie on the Perinuclear space side of the membrane. A helical membrane pass occupies residues 150-180 (SAWLPLLCALVHTISWLLIFSVLLIFDYAEL). The Nuclear segment spans residues 181 to 207 (MGIKQVYYFCLGMGDPLSHKSPRVARL). The helical transmembrane segment at 208–226 (YAHLRHPIYLELLLILWAV) threads the bilayer. Topologically, residues 227 to 232 (PCLPPD) are perinuclear space. Residues 233–250 (RLILAIFFTLYLSLVHRL) form a helical membrane-spanning segment. Residues 251–285 (DVQDYAYLRSQLEKKFLLFSREEASAVGGQIRKNN) are Nuclear-facing.

Belongs to the nurim family.

The protein resides in the nucleus inner membrane. This is Nurim (nrm) from Xenopus laevis (African clawed frog).